The sequence spans 241 residues: DNA repair protein RecO (241 aa).

The protein belongs to the RecO family.

Involved in DNA repair and RecF pathway recombination. In Phocaeicola vulgatus (strain ATCC 8482 / DSM 1447 / JCM 5826 / CCUG 4940 / NBRC 14291 / NCTC 11154) (Bacteroides vulgatus), this protein is DNA repair protein RecO.